We begin with the raw amino-acid sequence, 337 residues long: Tryptophan--tRNA ligase (337 aa).

ATP-binding positions include 11 to 13 (QPT) and 19 to 20 (GN). A 'HIGH' region motif is present at residues 12 to 20 (PTGALHLGN). An L-tryptophan-binding site is contributed by aspartate 135. Residues 147-149 (GED), valine 191, and 200-204 (KMSKS) each bind ATP. A 'KMSKS' region motif is present at residues 200–204 (KMSKS).

It belongs to the class-I aminoacyl-tRNA synthetase family. Homodimer.

The protein resides in the cytoplasm. The catalysed reaction is tRNA(Trp) + L-tryptophan + ATP = L-tryptophyl-tRNA(Trp) + AMP + diphosphate + H(+). Catalyzes the attachment of tryptophan to tRNA(Trp). This chain is Tryptophan--tRNA ligase, found in Prochlorococcus marinus (strain MIT 9313).